Here is a 464-residue protein sequence, read N- to C-terminus: Fumarate hydratase class II (464 aa).

Substrate-binding positions include 98–100 (SGT), 129–132 (HPND), 139–141 (SSN), and threonine 187. Histidine 188 functions as the Proton donor/acceptor in the catalytic mechanism. Residue serine 318 is part of the active site. Residues serine 319 and 324-326 (KVN) each bind substrate.

It belongs to the class-II fumarase/aspartase family. Fumarase subfamily. In terms of assembly, homotetramer.

The protein resides in the cytoplasm. It catalyses the reaction (S)-malate = fumarate + H2O. It functions in the pathway carbohydrate metabolism; tricarboxylic acid cycle; (S)-malate from fumarate: step 1/1. Functionally, involved in the TCA cycle. Catalyzes the stereospecific interconversion of fumarate to L-malate. In Pasteurella multocida (strain Pm70), this protein is Fumarate hydratase class II.